We begin with the raw amino-acid sequence, 466 residues long: Vimentin (466 aa).

Composition is skewed to low complexity over residues 1 to 13 (MSTR…SYRR) and 20 to 33 (TSSR…YVTT). Positions 1–33 (MSTRSVSSSSYRRMFGGSGTSSRPSSNRSYVTT) are disordered. N-acetylserine is present on S2. Residues 2 to 95 (STRSVSSSSY…FSLADAINTE (94 aa)) form a head region. At S5 the chain carries Phosphoserine. Residue S7 is modified to Phosphoserine; by PKA and PKC; alternate. S7 carries an O-linked (GlcNAc) serine; alternate glycan. Phosphoserine is present on S8. S9 and S10 each carry phosphoserine; by PKC. T20 is subject to Phosphothreonine. Residue S21 is modified to Phosphoserine; by PKC. S25 is subject to Phosphoserine; by PKA and PKC. Phosphoserine; by PKC is present on S26. T33 is a glycosylation site (O-linked (GlcNAc) threonine). Residue S34 is glycosylated (O-linked (GlcNAc) serine; alternate). A Phosphoserine; by PKC; alternate modification is found at S34. S39 bears the Phosphoserine; by CaMK2, PKA, PKC and ROCK2 mark. At S42 the chain carries Phosphoserine; by PKC. A Phosphoserine; by PKA modification is found at S47. The residue at position 49 (S49) is a Phosphoserine. The residue at position 51 (S51) is a Phosphoserine; by PKA and PKC. Y53 is modified (phosphotyrosine). Residues S55 and S56 each carry the phosphoserine modification. Y61 is modified (phosphotyrosine). Position 66 is a phosphoserine; by PKA and PKC (S66). S72 carries the phosphoserine; by AURKB and ROCK2 modification. S73 is modified (phosphoserine). A Phosphoserine; by CaMK2 modification is found at S83. S87 is subject to Phosphoserine. Residues 96-131 (FKNTRTNEKVELQELNDRFANYIDKVRFLEQQNKIL) are coil 1A. Positions 96–131 (FKNTRTNEKVELQELNDRFANYIDKVRFLEQQNKIL) form a coiled coil. Positions 103–411 (EKVELQELND…KLLEGEESRI (309 aa)) constitute an IF rod domain. A Glycyl lysine isopeptide (Lys-Gly) (interchain with G-Cter in SUMO2) cross-link involves residue K104. Position 117 is a phosphotyrosine (Y117). An N6-acetyllysine; alternate mark is found at K120, K129, and K139. Residues K120 and K129 each carry the N6-succinyllysine; alternate modification. Glycyl lysine isopeptide (Lys-Gly) (interchain with G-Cter in SUMO2); alternate cross-links involve residues K120, K129, and K139. Positions 132-153 (LAELEQLKGQGKSRLGDLYEEE) are linker 1. Position 144 is a phosphoserine (S144). A coiled-coil region spans residues 154–245 (MRELRRQVDQ…KLHDEEIQEL (92 aa)). Residues 154–245 (MRELRRQVDQ…KLHDEEIQEL (92 aa)) are coil 1B. K168 carries the N6-acetyllysine modification. K188 is modified (N6-acetyllysine; alternate). K188 is modified (N6-succinyllysine; alternate). The residue at position 214 (S214) is a Phosphoserine. Position 223 is an N6-acetyllysine; alternate (K223). K223 participates in a covalent cross-link: Glycyl lysine isopeptide (Lys-Gly) (interchain with G-Cter in SUMO2); alternate. At S226 the chain carries Phosphoserine. K235 bears the N6-acetyllysine mark. The segment at 246 to 268 (QAQIQEQHVQIDVDVSKPDLTAA) is linker 12. K262 participates in a covalent cross-link: Glycyl lysine isopeptide (Lys-Gly) (interchain with G-Cter in SUMO2). Residues 269–407 (LRDVRQQYES…ATYRKLLEGE (139 aa)) are coil 2. Position 294 is an N6-acetyllysine; alternate (K294). An N6-succinyllysine; alternate modification is found at K294. A Glycyl lysine isopeptide (Lys-Gly) (interchain with G-Cter in SUMO2); alternate cross-link involves residue K294. A Phosphoserine modification is found at S299. A coiled-coil region spans residues 303–407 (NRNNDALRQA…ATYRKLLEGE (105 aa)). Residue K313 forms a Glycyl lysine isopeptide (Lys-Gly) (interchain with G-Cter in SUMO2) linkage. S325 carries the post-translational modification Phosphoserine. The [IL]-x-C-x-x-[DE] motif motif lies at 326-329 (LTCE). K373 is modified (N6-acetyllysine; alternate). A Glycyl lysine isopeptide (Lys-Gly) (interchain with G-Cter in SUMO2); alternate cross-link involves residue K373. Residues 408–466 (ESRISLPLPTFSSLNLRETNLESLPLVDTHSKRTLLIKTVETRDGQVINETSQHHDDLE) are tail. A phosphoserine mark is found at S409, S412, S419, and S420. A Phosphothreonine modification is found at T426. S430 is subject to Phosphoserine. T436 carries the phosphothreonine modification. Residue S438 is modified to Phosphoserine. K439 participates in a covalent cross-link: Glycyl lysine isopeptide (Lys-Gly) (interchain with G-Cter in SUMO2). The residue at position 445 (K445) is an N6-acetyllysine; alternate. K445 carries the post-translational modification N6-succinyllysine; alternate. A Glycyl lysine isopeptide (Lys-Gly) (interchain with G-Cter in SUMO2); alternate cross-link involves residue K445. Residue K445 forms a Glycyl lysine isopeptide (Lys-Gly) (interchain with G-Cter in SUMO1); alternate linkage. A phosphothreonine mark is found at T446 and T458. At S459 the chain carries Phosphoserine.

This sequence belongs to the intermediate filament family. In terms of assembly, homomer assembled from elementary dimers. Identified in complexes that contain VIM, EZR, AHNAK, BFSP1, BFSP2, ANK2, PLEC, PRX and spectrin. Interacts with BCAS3. Interacts with LGSN. Interacts with SYNM. Interacts (via rod region) with PLEC (via CH 1 domain). Interacts with PLEC isoform 1C. Interacts with STK33. Interacts with LARP6. Interacts with RAB8B. Interacts with TOR1A; the interaction associates TOR1A with the cytoskeleton. Interacts with TOR1AIP1. Interacts with DIAPH1. Interacts with EPPK1; interaction is dependent of higher-order structure of intermediate filament. Interacts with the non-receptor tyrosine kinase SRMS; the interaction leads to phosphorylation of VIM. Interacts with NOD2. Interacts (via head region) with CORO1C. Interacts with HDGF. Interacts with PRKCE (via phorbol-ester/DAG-type 2 domain). Interacts with BFSP2. Interacts with PPL. Interacts with PKP1 and PKP2. Interacts with SCRIB (via PDZ domains); the interaction protects SCRIB from proteasomal degradation and facilitates SCRIB localization to intermediate filaments, the interaction is reduced by cell contact inhibition. In terms of processing, phosphorylation by PKN1 inhibits the formation of filaments. Filament disassembly during mitosis is promoted by phosphorylation at Ser-55 as well as by nestin. One of the most prominent phosphoproteins in various cells of mesenchymal origin. Phosphorylation is enhanced during cell division, at which time vimentin filaments are significantly reorganized. Phosphorylated at Ser-56 by CDK5 during neutrophil secretion in the cytoplasm. Phosphorylated by STK33. Phosphorylated on tyrosine residues by SRMS. Post-translationally, S-nitrosylation is induced by interferon-gamma and oxidatively-modified low-densitity lipoprotein (LDL(ox)) possibly implicating the iNOS-S100A8/9 transnitrosylase complex. As to expression, detected in eye lens fiber cells (at protein level). Expressed in retinal lens epithelial cells (at protein level). Expressed in Langerhans cells in the epidermis (at protein level).

Its subcellular location is the cytoplasm. It localises to the cytoskeleton. It is found in the nucleus matrix. The protein localises to the cell membrane. Vimentins are class-III intermediate filaments found in various non-epithelial cells, especially mesenchymal cells. Vimentin is attached to the nucleus, endoplasmic reticulum, and mitochondria, either laterally or terminally. Plays a role in cell directional movement, orientation, cell sheet organization and Golgi complex polarization at the cell migration front. Protects SCRIB from proteasomal degradation and facilitates its localization to intermediate filaments in a cell contact-mediated manner. Functionally, involved with LARP6 in the stabilization of type I collagen mRNAs for CO1A1 and CO1A2. In Mus musculus (Mouse), this protein is Vimentin.